We begin with the raw amino-acid sequence, 1350 residues long: ABC transporter G family member 45 (1350 aa).

Residues 1-23 (MAAAVELTGDGGTTAETRWLSPP) form a disordered region. The ABC transporter 1 domain maps to 85–357 (AACAHMCTTR…FETMGFKCPS (273 aa)). Position 118–125 (118–125 (GAPGSGKT)) interacts with ATP. One can recognise an ABC transmembrane type-2 1 domain in the interval 434-647 (NIFKACFSRE…AQNAVALNEF (214 aa)). Transmembrane regions (helical) follow at residues 453–473 (VHIF…TLFL), 491–511 (ALFM…AMTI), 523–543 (ILAL…LPIS), 557–577 (VIGY…LFAM), 597–617 (MANM…GFVI), and 683–703 (ICVS…IFAL). The ABC transporter 2 domain occupies 749-1001 (LVFDHINYFV…NMIKYFEAIP (253 aa)). 794–801 (GITGAGKT) contributes to the ATP binding site. The ABC transmembrane type-2 2 domain maps to 1074–1288 (AQCMACLWKQ…TVYGLMFSQL (215 aa)). Transmembrane regions (helical) follow at residues 1099–1119 (INTF…GSTI), 1126–1146 (FNIL…NCSI), 1181–1201 (LPYM…MIGF), 1208–1228 (FFWF…YGMM), 1238–1258 (IAAG…GFII), 1269–1289 (WVYW…SQLG), and 1322–1342 (LVTS…FLSI).

This sequence belongs to the ABC transporter superfamily. ABCG family. PDR (TC 3.A.1.205) subfamily.

The protein localises to the membrane. May be a general defense protein. The protein is ABC transporter G family member 45 of Oryza sativa subsp. japonica (Rice).